A 294-amino-acid polypeptide reads, in one-letter code: Small ribosomal subunit protein uS2 (294 aa).

The protein belongs to the universal ribosomal protein uS2 family.

In Mycoplasma pneumoniae (strain ATCC 29342 / M129 / Subtype 1) (Mycoplasmoides pneumoniae), this protein is Small ribosomal subunit protein uS2 (rpsB).